A 331-amino-acid polypeptide reads, in one-letter code: Ribose-phosphate pyrophosphokinase (331 aa).

An ATP-binding site is contributed by 55 to 57 (DGE). Positions 148 and 187 each coordinate Mg(2+). Lysine 211 is a catalytic residue. Residues arginine 213, aspartate 237, and 241-245 (DTAGT) contribute to the D-ribose 5-phosphate site.

It belongs to the ribose-phosphate pyrophosphokinase family. Class I subfamily. As to quaternary structure, homohexamer. Mg(2+) serves as cofactor.

Its subcellular location is the cytoplasm. The enzyme catalyses D-ribose 5-phosphate + ATP = 5-phospho-alpha-D-ribose 1-diphosphate + AMP + H(+). It functions in the pathway metabolic intermediate biosynthesis; 5-phospho-alpha-D-ribose 1-diphosphate biosynthesis; 5-phospho-alpha-D-ribose 1-diphosphate from D-ribose 5-phosphate (route I): step 1/1. Its function is as follows. Involved in the biosynthesis of the central metabolite phospho-alpha-D-ribosyl-1-pyrophosphate (PRPP) via the transfer of pyrophosphoryl group from ATP to 1-hydroxyl of ribose-5-phosphate (Rib-5-P). The protein is Ribose-phosphate pyrophosphokinase of Synechococcus elongatus (strain ATCC 33912 / PCC 7942 / FACHB-805) (Anacystis nidulans R2).